Consider the following 510-residue polypeptide: MDIRAAEISAILKDQIKNFGQEAEVTEVGQVLSVGDGIARVYGLDNVLAGEMVEFENGTRGMALNLETDNVGIVIFGADREIKEGQTVKRTRSIVDTPVGKGLLGRVVDALGNPIDGKGPIQATERKRVDVKAPGIIPRKSVNEPMATGLKAIDALIPVGRGQRELIIGDRQTGKTAIALDTILNQKPLNVEGAPEGQKLYCVYVAVGQKRSTVAQFVKVLEEQGALEYSIVVAATASDPAPMQYIAPFTGCTMGEYFRDNGMHAVIIYDDLSKQAVAYRQMSLLLRRPPGREAYPGDVFYLHSRLLERAAKLNEDHGSGSLTALPIIETQANDVSAYIPTNVISITDGQIFLETDLFFQGIRPAVNVGLSVSRVGSSAQTKAMKKVAGKIKGELAQYREMAAFAQFGSDLDASTQRLLNRGSRLTELLKQPQFSPLKMEEQVVVIYAGVNGYLDALPVAKVRSFEDGLLSLLRGKESAILDAIRTSRDLSDDTAAKLKAVIESYAKTFA.

An ATP-binding site is contributed by 169 to 176 (GDRQTGKT).

Belongs to the ATPase alpha/beta chains family. F-type ATPases have 2 components, CF(1) - the catalytic core - and CF(0) - the membrane proton channel. CF(1) has five subunits: alpha(3), beta(3), gamma(1), delta(1), epsilon(1). CF(0) has four main subunits: a(1), b(1), b'(1) and c(9-12).

It is found in the cell inner membrane. It catalyses the reaction ATP + H2O + 4 H(+)(in) = ADP + phosphate + 5 H(+)(out). Its function is as follows. Produces ATP from ADP in the presence of a proton gradient across the membrane. The alpha chain is a regulatory subunit. This is ATP synthase subunit alpha from Rhodopseudomonas palustris (strain BisB5).